The chain runs to 334 residues: Type IV inositol polyphosphate 5-phosphatase 11 (334 aa).

2 catalytic regions span residues 206–222 and 282–297; these read DLTV…QDVS and KIRV…FKIQ.

The protein belongs to the inositol polyphosphate 5-phosphatase family. As to expression, expressed ubiquitously.

It is found in the cell membrane. It catalyses the reaction a 1,2-diacyl-sn-glycero-3-phospho-(1D-myo-inositol-4,5-bisphosphate) + H2O = a 1,2-diacyl-sn-glycero-3-phospho-(1D-myo-inositol 4-phosphate) + phosphate. It carries out the reaction a 1,2-diacyl-sn-glycero-3-phospho-(1D-myo-inositol-3,4,5-trisphosphate) + H2O = a 1,2-diacyl-sn-glycero-3-phospho-(1D-myo-inositol-3,4-bisphosphate) + phosphate. In terms of biological role, has phosphatase activity toward PtdIns(4,5)P2, and in vitro toward PtdIns(3,5)P2 and PtdIns(3,4,5)P3. Cannot dephosphorylate PtdIns(5)P, Ins(1,4,5)P3 and Ins(1,3,4,5)P4. The sequence is that of Type IV inositol polyphosphate 5-phosphatase 11 from Arabidopsis thaliana (Mouse-ear cress).